The chain runs to 472 residues: Methanethiol oxidase (472 aa).

Belongs to the selenium-binding protein family.

It localises to the nucleus. The protein localises to the cytoplasm. It is found in the cytosol. Its subcellular location is the membrane. It carries out the reaction methanethiol + O2 + H2O = hydrogen sulfide + formaldehyde + H2O2 + H(+). It functions in the pathway organosulfur degradation. Functionally, catalyzes the oxidation of methanethiol, an organosulfur compound known to be produced in substantial amounts by gut bacteria. Selenium-binding protein which may be involved in the sensing of reactive xenobiotics in the cytoplasm. May be involved in intra-Golgi protein transport. This Xenopus laevis (African clawed frog) protein is Methanethiol oxidase (selenbp1-a).